The following is a 760-amino-acid chain: Heat shock transcription factor (760 aa).

Disordered stretches follow at residues 1–132 and 206–276; these read MIMN…PPVV and FHPL…GPKT. 2 stretches are compositionally biased toward polar residues: residues 19-31 and 38-88; these read TESN…SSPS and RSGT…SNKL. Positions 119–130 are enriched in basic and acidic residues; the sequence is DYKDSIDLDKPP. Residues 221–247 show a composition bias toward low complexity; it reads AGPANNSQQQQQQQQQDSSIPSDGISS. The DNA-binding element occupies 276 to 385; the sequence is TRPAFVMKIW…EDLLDKIVRN (110 aa). The tract at residues 414–467 is involved in trimerization; it reads ELETIKMNQYVISEDLRRVRQDNKMLWQENYLNRERNQVQGRTLDKILKFLSVV. 4 disordered regions span residues 492–545, 560–582, 609–630, and 674–760; these read TQYR…NNNN, LTNR…EGSI, HQPG…SAPS, and QEQH…VSDH. The segment covering 515–539 has biased composition (polar residues); it reads NSRFARDNNQTAQPTYESPLSTSDT. Ser-570 bears the Phosphoserine mark. Thr-574 bears the Phosphothreonine mark. Ser-576 bears the Phosphoserine mark. The residue at position 577 (Thr-577) is a Phosphothreonine. The segment covering 613 to 628 has biased composition (low complexity); that stretch reads ATTNNNNHSSSTAISA. Residues 646-684 adopt a coiled-coil conformation; it reads RNLDDLEKHINKEGQSIQQVQDWIDKLAQEQHEKQQQQQ. Polar residues-rich tracts occupy residues 701–722 and 731–742; these read ATTT…NISF and PGSNVSSNINDS. Over residues 744–760 the composition is skewed to basic and acidic residues; it reads GNEKKSKKRSIEEVSDH.

It belongs to the HSF family. Homotrimer. Homotrimerization increases the affinity of HSF1 to DNA. Interacts with HSP90. In terms of processing, activated by phosphorylation of at least Ser-570, Thr-574, Ser-576 and Thr-577 in response to heat shock. Additional unidentified residues are also phosphorylated in response to heat shock.

Its subcellular location is the nucleus. DNA-binding transcription factor that specifically binds heat shock promoter elements (HSE) and activates transcription. With HSP90, is required for the modulation of the chaperone levels in response to growth temperature, rather than the activation of acute responses to sudden thermal transitions. Activated during infection and contributes to full virulence. This Candida albicans (strain SC5314 / ATCC MYA-2876) (Yeast) protein is Heat shock transcription factor.